The primary structure comprises 119 residues: Small ribosomal subunit protein uS13 (119 aa).

Positions R92–R119 are disordered.

The protein belongs to the universal ribosomal protein uS13 family. Part of the 30S ribosomal subunit. Forms a loose heterodimer with protein S19. Forms two bridges to the 50S subunit in the 70S ribosome.

Located at the top of the head of the 30S subunit, it contacts several helices of the 16S rRNA. In the 70S ribosome it contacts the 23S rRNA (bridge B1a) and protein L5 of the 50S subunit (bridge B1b), connecting the 2 subunits; these bridges are implicated in subunit movement. Contacts the tRNAs in the A and P-sites. This Halorhodospira halophila (strain DSM 244 / SL1) (Ectothiorhodospira halophila (strain DSM 244 / SL1)) protein is Small ribosomal subunit protein uS13.